The sequence spans 679 residues: Glycine--tRNA ligase beta subunit (679 aa).

The protein belongs to the class-II aminoacyl-tRNA synthetase family. As to quaternary structure, tetramer of two alpha and two beta subunits.

The protein localises to the cytoplasm. The catalysed reaction is tRNA(Gly) + glycine + ATP = glycyl-tRNA(Gly) + AMP + diphosphate. This chain is Glycine--tRNA ligase beta subunit, found in Streptococcus agalactiae serotype Ia (strain ATCC 27591 / A909 / CDC SS700).